A 460-amino-acid polypeptide reads, in one-letter code: MLKVLIPTIMLFPTIWLTPPKWLWSTTTAHGLLIALISLTWLKWSSEVGSATSSLYLASDPLSTPLLGLTCWLLPLMVLASQNHITPEPIIRQRLYITLLASLQTFLIMAFGATEIIMFYIMFEATLIPTLIIITRWGNQTERLNAGTYFLFYTLAGSLPLLVALLLLQQTNGTLSLLILQHSQPLALTSWGHKIWWAGCLIAFLVKMPLYGVHLWLPKAHVEAPVAGSMVLAAVLLKLGGYGMMRMMVVLDPLSKELAYPFIILALWGIIMTGSICLRQTDLKSLIAYSSVSHMGLVAGGILIQTPWGFTGAIILMIAHGLVSSALFCLANTAYERTHSRTMILARGLQMIFPLTAVWWFIANLANLALPPLPNLMGELMIITTLFNWSPLTIILTGTGTLITAGYSLYLFLMSQRGPTPKHIVGLPPFHTREHLLMALHLIPVLLLMTKPEIMWGWCY.

The next 12 helical transmembrane spans lie at proline 20 to leucine 42, proline 61 to serine 81, glutamine 93 to alanine 113, threonine 114 to isoleucine 134, threonine 148 to leucine 168, isoleucine 195 to leucine 215, proline 225 to methionine 245, leucine 258 to leucine 278, serine 285 to isoleucine 304, glycine 309 to alanine 331, methionine 351 to proline 371, and isoleucine 394 to methionine 414.

This sequence belongs to the complex I subunit 4 family.

The protein resides in the mitochondrion membrane. The enzyme catalyses a ubiquinone + NADH + 5 H(+)(in) = a ubiquinol + NAD(+) + 4 H(+)(out). Functionally, core subunit of the mitochondrial membrane respiratory chain NADH dehydrogenase (Complex I) that is believed to belong to the minimal assembly required for catalysis. Complex I functions in the transfer of electrons from NADH to the respiratory chain. The immediate electron acceptor for the enzyme is believed to be ubiquinone. This chain is NADH-ubiquinone oxidoreductase chain 4 (MT-ND4), found in Formosania lacustris (Oriental stream loach).